Consider the following 72-residue polypeptide: Translation initiation factor IF-1 (72 aa).

The S1-like domain occupies 1-72 (MAKDDVIEVE…TRGRITYRFK (72 aa)).

Belongs to the IF-1 family. As to quaternary structure, component of the 30S ribosomal translation pre-initiation complex which assembles on the 30S ribosome in the order IF-2 and IF-3, IF-1 and N-formylmethionyl-tRNA(fMet); mRNA recruitment can occur at any time during PIC assembly.

It localises to the cytoplasm. Functionally, one of the essential components for the initiation of protein synthesis. Stabilizes the binding of IF-2 and IF-3 on the 30S subunit to which N-formylmethionyl-tRNA(fMet) subsequently binds. Helps modulate mRNA selection, yielding the 30S pre-initiation complex (PIC). Upon addition of the 50S ribosomal subunit IF-1, IF-2 and IF-3 are released leaving the mature 70S translation initiation complex. In Streptococcus gordonii (strain Challis / ATCC 35105 / BCRC 15272 / CH1 / DL1 / V288), this protein is Translation initiation factor IF-1.